A 340-amino-acid polypeptide reads, in one-letter code: Uroporphyrinogen decarboxylase (340 aa).

Substrate contacts are provided by residues 21–25, Asp-71, Tyr-147, Ser-202, and His-316; that span reads RQAGR.

It belongs to the uroporphyrinogen decarboxylase family. In terms of assembly, homodimer.

The protein resides in the cytoplasm. It catalyses the reaction uroporphyrinogen III + 4 H(+) = coproporphyrinogen III + 4 CO2. Its pathway is porphyrin-containing compound metabolism; protoporphyrin-IX biosynthesis; coproporphyrinogen-III from 5-aminolevulinate: step 4/4. Its function is as follows. Catalyzes the decarboxylation of four acetate groups of uroporphyrinogen-III to yield coproporphyrinogen-III. This chain is Uroporphyrinogen decarboxylase, found in Nitratiruptor sp. (strain SB155-2).